Here is a 292-residue protein sequence, read N- to C-terminus: [LysW]-aminoadipate kinase (292 aa).

Substrate-binding residues include Arg89 and Asn193.

The protein belongs to the acetylglutamate kinase family. LysZ subfamily.

It is found in the cytoplasm. It catalyses the reaction [amino-group carrier protein]-C-terminal-N-(1,4-dicarboxybutan-1-yl)-L-glutamine + ATP = [amino-group carrier protein]-C-terminal-N-(1-carboxy-5-phosphooxy-5-oxopentan-1-yl)-L-glutamine + ADP. The protein operates within amino-acid biosynthesis; L-lysine biosynthesis via AAA pathway; L-lysine from L-alpha-aminoadipate (Thermus route): step 2/5. Catalyzes the phosphorylation of LysW-gamma-alpha-aminoadipate. The polypeptide is [LysW]-aminoadipate kinase (Deinococcus radiodurans (strain ATCC 13939 / DSM 20539 / JCM 16871 / CCUG 27074 / LMG 4051 / NBRC 15346 / NCIMB 9279 / VKM B-1422 / R1)).